The chain runs to 154 residues: Oleosin 16.4 kDa (154 aa).

A2 bears the N-acetylalanine mark. A polar region spans residues 2–33; that stretch reads ADRDRSYRTFDQVVRGDRTNYQSGPSTTQVLT. The next 3 helical transmembrane spans lie at 31–51, 65–85, and 86–106; these read VLTV…AGLT, LFVI…MAVA, and GFLS…YVFN. The interval 34–105 is hydrophobic; that stretch reads VLTLLPIGGT…TGLSSLSYVF (72 aa).

It belongs to the oleosin family.

The protein localises to the lipid droplet. The protein resides in the membrane. May have a structural role to stabilize the lipid body during desiccation of the seed by preventing coalescence of the oil. Probably interacts with both lipid and phospholipid moieties of lipid bodies. May also provide recognition signals for specific lipase anchorage in lipolysis during seedling growth. The sequence is that of Oleosin 16.4 kDa (MATP7) from Gossypium hirsutum (Upland cotton).